Reading from the N-terminus, the 325-residue chain is uncharacterized protein (325 aa).

Residues arginine 49–threonine 151 enclose the HD domain.

This is an uncharacterized protein from Bacillus subtilis (strain 168).